Here is a 448-residue protein sequence, read N- to C-terminus: MAKHRYLPMTEQDEKEMLDVIGVKSIDDLFQDIPEKIRFKRDYDLKPAKSEPALLRELSKLASKNANTTEYASFLGAGVYSHYIPTVVDHVISRSEFYTAYTPYQPEISQGELQAIFEFQTMIAELTGMDLANSSMYDGGTALAEAAMLASGHTKRKKILISGAVHPESSNVLKTYATGQHIEVEVIPELDGKTDIEALKKALSDDIAGFVVQYPNFYGQVEPLAELEKLVHENNSLLLVSSNPLSLGLLTPPGEFGADIVVGDSQVFGIPESFGGPHCGFFAVTNKLMRKVPGRLVGETVDENGKRGYVLTLQAREQHIRRDKATSNICSNQALNALASSVAMATLGKTGLVEMAKQNLDKSHYAKQKFREKGFEVLFSDGFFNEFVVKLSKPIKEVNESLLDEGIIGGYDLGFYEEKYENHMLVAVTEMRTKEEIDAFVASLEGAK.

It belongs to the GcvP family. N-terminal subunit subfamily. In terms of assembly, the glycine cleavage system is composed of four proteins: P, T, L and H. In this organism, the P 'protein' is a heterodimer of two subunits.

It carries out the reaction N(6)-[(R)-lipoyl]-L-lysyl-[glycine-cleavage complex H protein] + glycine + H(+) = N(6)-[(R)-S(8)-aminomethyldihydrolipoyl]-L-lysyl-[glycine-cleavage complex H protein] + CO2. Its function is as follows. The glycine cleavage system catalyzes the degradation of glycine. The P protein binds the alpha-amino group of glycine through its pyridoxal phosphate cofactor; CO(2) is released and the remaining methylamine moiety is then transferred to the lipoamide cofactor of the H protein. In Listeria monocytogenes serotype 4b (strain F2365), this protein is Probable glycine dehydrogenase (decarboxylating) subunit 1.